The chain runs to 488 residues: Ribulose bisphosphate carboxylase large chain (488 aa).

Residues N128 and T178 each coordinate substrate. K180 (proton acceptor) is an active-site residue. Position 182 (K182) interacts with substrate. Residues K206, D208, and E209 each coordinate Mg(2+). At K206 the chain carries N6-carboxylysine. The active-site Proton acceptor is the H298. Residues R299, H331, and S383 each contribute to the substrate site.

It belongs to the RuBisCO large chain family. Type I subfamily. Heterohexadecamer of 8 large chains and 8 small chains. It depends on Mg(2+) as a cofactor.

The catalysed reaction is 2 (2R)-3-phosphoglycerate + 2 H(+) = D-ribulose 1,5-bisphosphate + CO2 + H2O. The enzyme catalyses D-ribulose 1,5-bisphosphate + O2 = 2-phosphoglycolate + (2R)-3-phosphoglycerate + 2 H(+). RuBisCO catalyzes two reactions: the carboxylation of D-ribulose 1,5-bisphosphate, the primary event in carbon dioxide fixation, as well as the oxidative fragmentation of the pentose substrate. Both reactions occur simultaneously and in competition at the same active site. The chain is Ribulose bisphosphate carboxylase large chain from Xanthobacter flavus.